The chain runs to 451 residues: Enolase (451 aa).

Q167 contacts (2R)-2-phosphoglycerate. The Proton donor role is filled by E209. Residues D250, E307, and D334 each coordinate Mg(2+). K359, R388, S389, and K410 together coordinate (2R)-2-phosphoglycerate. Catalysis depends on K359, which acts as the Proton acceptor.

This sequence belongs to the enolase family. Requires Mg(2+) as cofactor.

It is found in the cytoplasm. The protein resides in the secreted. Its subcellular location is the cell surface. The enzyme catalyses (2R)-2-phosphoglycerate = phosphoenolpyruvate + H2O. Its pathway is carbohydrate degradation; glycolysis; pyruvate from D-glyceraldehyde 3-phosphate: step 4/5. Catalyzes the reversible conversion of 2-phosphoglycerate (2-PG) into phosphoenolpyruvate (PEP). It is essential for the degradation of carbohydrates via glycolysis. This Mesomycoplasma hyopneumoniae (strain J / ATCC 25934 / NCTC 10110) (Mycoplasma hyopneumoniae) protein is Enolase.